We begin with the raw amino-acid sequence, 229 residues long: Enolase-phosphatase E1 (229 aa).

The protein belongs to the HAD-like hydrolase superfamily. MasA/MtnC family. Monomer. Mg(2+) is required as a cofactor.

It catalyses the reaction 5-methylsulfanyl-2,3-dioxopentyl phosphate + H2O = 1,2-dihydroxy-5-(methylsulfanyl)pent-1-en-3-one + phosphate. It functions in the pathway amino-acid biosynthesis; L-methionine biosynthesis via salvage pathway; L-methionine from S-methyl-5-thio-alpha-D-ribose 1-phosphate: step 3/6. The protein operates within amino-acid biosynthesis; L-methionine biosynthesis via salvage pathway; L-methionine from S-methyl-5-thio-alpha-D-ribose 1-phosphate: step 4/6. Functionally, bifunctional enzyme that catalyzes the enolization of 2,3-diketo-5-methylthiopentyl-1-phosphate (DK-MTP-1-P) into the intermediate 2-hydroxy-3-keto-5-methylthiopentenyl-1-phosphate (HK-MTPenyl-1-P), which is then dephosphorylated to form the acireductone 1,2-dihydroxy-3-keto-5-methylthiopentene (DHK-MTPene). This is Enolase-phosphatase E1 from Pectobacterium carotovorum subsp. carotovorum (strain PC1).